The following is a 130-amino-acid chain: Small ribosomal subunit protein uS8 (130 aa).

The protein belongs to the universal ribosomal protein uS8 family. As to quaternary structure, part of the 30S ribosomal subunit. Contacts proteins S5 and S12.

In terms of biological role, one of the primary rRNA binding proteins, it binds directly to 16S rRNA central domain where it helps coordinate assembly of the platform of the 30S subunit. The polypeptide is Small ribosomal subunit protein uS8 (Wigglesworthia glossinidia brevipalpis).